Reading from the N-terminus, the 371-residue chain is RNA polymerase sigma factor SigA (371 aa).

The sigma-70 factor domain-2 stretch occupies residues 137–207; sequence LAEANLRLVV…TRAIADQART (71 aa). The Interaction with polymerase core subunit RpoC motif lies at 161 to 164; that stretch reads DLIQ. The sigma-70 factor domain-3 stretch occupies residues 216–292; it reads ETINKLVREQ…DEVIENPVDY (77 aa). Positions 305-358 are sigma-70 factor domain-4; that stretch reads VLDTLTDREENVLRLRFGLDDGKMRTLEDVGKVFDVTRERIRQIEAKALRKLRH. A DNA-binding region (H-T-H motif) is located at residues 331 to 350; sequence LEDVGKVFDVTRERIRQIEA.

It belongs to the sigma-70 factor family. RpoD/SigA subfamily. In terms of assembly, interacts transiently with the RNA polymerase catalytic core.

The protein localises to the cytoplasm. Sigma factors are initiation factors that promote the attachment of RNA polymerase to specific initiation sites and are then released. This sigma factor is the primary sigma factor during exponential growth. The chain is RNA polymerase sigma factor SigA from Streptococcus mutans serotype c (strain ATCC 700610 / UA159).